The sequence spans 376 residues: Zinc finger CCCH domain-containing protein C337.12 (376 aa).

Residues 2-25 (NEQQLLENIASLAGAINQYKNEKE) are a coiled coil. The interval 60 to 95 (SKSTAASPPYVIPSTSSNADDANKEPEKQSTSDYVS) is disordered. A compositionally biased stretch (basic and acidic residues) spans 80-89 (DANKEPEKQS). A coiled-coil region spans residues 105 to 140 (KKNILEHDLQARKANLESYRAKLEKEYKTLAENKIQ). 4 C3H1-type zinc fingers span residues 202 to 228 (SPSA…FVHE), 229 to 256 (PTRK…HELD), 257 to 283 (PRRI…HIHY), and 284 to 312 (SENA…HILQ). The segment at 347 to 376 (SKTAGSINPEDSGSEIGSNSLESNLDFISV) is disordered. Residues 349 to 369 (TAGSINPEDSGSEIGSNSLES) show a composition bias toward polar residues.

The protein resides in the nucleus. The protein is Zinc finger CCCH domain-containing protein C337.12 of Schizosaccharomyces pombe (strain 972 / ATCC 24843) (Fission yeast).